Here is a 313-residue protein sequence, read N- to C-terminus: Ubiquitin-conjugating enzyme E2 Z (313 aa).

The region spanning 58 to 212 (QCVLRIKRDI…IRHETIRVAV (155 aa)) is the UBC core domain. The Glycyl thioester intermediate role is filled by Cys147. The disordered stretch occupies residues 283–313 (VREKHRKETVDIDSDSSSSETETDTQGSSNP). Residues 297 to 313 (DSSSSETETDTQGSSNP) show a composition bias toward low complexity.

This sequence belongs to the ubiquitin-conjugating enzyme family.

It is found in the cytoplasm. The protein resides in the nucleus. The enzyme catalyses S-ubiquitinyl-[E1 ubiquitin-activating enzyme]-L-cysteine + [E2 ubiquitin-conjugating enzyme]-L-cysteine = [E1 ubiquitin-activating enzyme]-L-cysteine + S-ubiquitinyl-[E2 ubiquitin-conjugating enzyme]-L-cysteine.. It functions in the pathway protein modification; protein ubiquitination. Its function is as follows. Catalyzes the covalent attachment of ubiquitin to other proteins. May be involved in apoptosis regulation. This is Ubiquitin-conjugating enzyme E2 Z (ube2z) from Xenopus tropicalis (Western clawed frog).